We begin with the raw amino-acid sequence, 75 residues long: uncharacterized protein (75 aa).

This is an uncharacterized protein from Enterobacteria phage T4 (Bacteriophage T4).